A 127-amino-acid polypeptide reads, in one-letter code: Large ribosomal subunit protein bL17 (127 aa).

It belongs to the bacterial ribosomal protein bL17 family. As to quaternary structure, part of the 50S ribosomal subunit. Contacts protein L32.

This chain is Large ribosomal subunit protein bL17, found in Leuconostoc citreum (strain KM20).